The primary structure comprises 511 residues: Maturase K (511 aa).

This sequence belongs to the intron maturase 2 family. MatK subfamily.

Its subcellular location is the plastid. It is found in the chloroplast. Functionally, usually encoded in the trnK tRNA gene intron. Probably assists in splicing its own and other chloroplast group II introns. This Trifolium burchellianum (Wild clover) protein is Maturase K.